A 407-amino-acid chain; its full sequence is S-adenosylmethionine synthase (407 aa).

Residue H21 participates in ATP binding. D23 is a binding site for Mg(2+). Residue E49 participates in K(+) binding. L-methionine is bound by residues E62 and Q105. The segment at 105–115 (QSQEIGAGVDA) is flexible loop. ATP is bound by residues 179–181 (DGK), D259, 265–266 (RK), A282, and K286. D259 contributes to the L-methionine binding site. K290 provides a ligand contact to L-methionine.

Belongs to the AdoMet synthase family. In terms of assembly, homotetramer; dimer of dimers. Requires Mg(2+) as cofactor. It depends on K(+) as a cofactor.

Its subcellular location is the cytoplasm. The catalysed reaction is L-methionine + ATP + H2O = S-adenosyl-L-methionine + phosphate + diphosphate. Its pathway is amino-acid biosynthesis; S-adenosyl-L-methionine biosynthesis; S-adenosyl-L-methionine from L-methionine: step 1/1. Its function is as follows. Catalyzes the formation of S-adenosylmethionine (AdoMet) from methionine and ATP. The overall synthetic reaction is composed of two sequential steps, AdoMet formation and the subsequent tripolyphosphate hydrolysis which occurs prior to release of AdoMet from the enzyme. The chain is S-adenosylmethionine synthase from Corynebacterium aurimucosum (strain ATCC 700975 / DSM 44827 / CIP 107346 / CN-1) (Corynebacterium nigricans).